Reading from the N-terminus, the 87-residue chain is NADH dehydrogenase [ubiquinone] 1 alpha subcomplex subunit 4-like 2 (87 aa).

Belongs to the complex I NDUFA4 subunit family.

The sequence is that of NADH dehydrogenase [ubiquinone] 1 alpha subcomplex subunit 4-like 2 (Ndufa4l2) from Mus musculus (Mouse).